A 271-amino-acid chain; its full sequence is 4-diphosphocytidyl-2-C-methyl-D-erythritol kinase (271 aa).

K17 is a catalytic residue. 97–107 (PVGSGLGGGSS) serves as a coordination point for ATP. D137 is a catalytic residue.

This sequence belongs to the GHMP kinase family. IspE subfamily.

The enzyme catalyses 4-CDP-2-C-methyl-D-erythritol + ATP = 4-CDP-2-C-methyl-D-erythritol 2-phosphate + ADP + H(+). It participates in isoprenoid biosynthesis; isopentenyl diphosphate biosynthesis via DXP pathway; isopentenyl diphosphate from 1-deoxy-D-xylulose 5-phosphate: step 3/6. Functionally, catalyzes the phosphorylation of the position 2 hydroxy group of 4-diphosphocytidyl-2C-methyl-D-erythritol. The polypeptide is 4-diphosphocytidyl-2-C-methyl-D-erythritol kinase (Thermotoga petrophila (strain ATCC BAA-488 / DSM 13995 / JCM 10881 / RKU-1)).